We begin with the raw amino-acid sequence, 237 residues long: Ribose-5-phosphate isomerase A (237 aa).

Residues 29-32 (SGST), 86-89 (DGAD), and 99-102 (KGGG) contribute to the substrate site. The Proton acceptor role is filled by Glu108. Lys126 is a substrate binding site.

It belongs to the ribose 5-phosphate isomerase family. As to quaternary structure, homodimer.

It catalyses the reaction aldehydo-D-ribose 5-phosphate = D-ribulose 5-phosphate. Its pathway is carbohydrate degradation; pentose phosphate pathway; D-ribose 5-phosphate from D-ribulose 5-phosphate (non-oxidative stage): step 1/1. Its function is as follows. Catalyzes the reversible conversion of ribose-5-phosphate to ribulose 5-phosphate. The protein is Ribose-5-phosphate isomerase A of Prochlorococcus marinus (strain MIT 9312).